The following is a 510-amino-acid chain: Maturase K (510 aa).

The protein belongs to the intron maturase 2 family. MatK subfamily.

Its subcellular location is the plastid. It localises to the chloroplast. In terms of biological role, usually encoded in the trnK tRNA gene intron. Probably assists in splicing its own and other chloroplast group II introns. The chain is Maturase K from Populus trichocarpa (Western balsam poplar).